A 341-amino-acid polypeptide reads, in one-letter code: Ribosomal RNA small subunit methyltransferase H (341 aa).

Residues 47–49 (GGY), aspartate 64, phenylalanine 91, aspartate 109, and glutamine 116 contribute to the S-adenosyl-L-methionine site.

The protein belongs to the methyltransferase superfamily. RsmH family.

Its subcellular location is the cytoplasm. The catalysed reaction is cytidine(1402) in 16S rRNA + S-adenosyl-L-methionine = N(4)-methylcytidine(1402) in 16S rRNA + S-adenosyl-L-homocysteine + H(+). Functionally, specifically methylates the N4 position of cytidine in position 1402 (C1402) of 16S rRNA. This chain is Ribosomal RNA small subunit methyltransferase H, found in Agrobacterium fabrum (strain C58 / ATCC 33970) (Agrobacterium tumefaciens (strain C58)).